A 288-amino-acid polypeptide reads, in one-letter code: Serine/threonine-protein phosphatase PGAM5, mitochondrial (288 aa).

The Mitochondrial matrix portion of the chain corresponds to 1 to 6; that stretch reads MAFRQA. A helical transmembrane segment spans residues 7 to 29; sequence LQLAACGLAGGSAAVLFSAVAVG. Residues 30–288 lie on the Mitochondrial intermembrane side of the membrane; that stretch reads KPRAGGDADT…FMPPDKITRS (259 aa). The tract at residues 76–81 is interaction with KEAP1; sequence NVEFGE. Position 86 is a phosphoserine (S86). N6-acetyllysine is present on residues K115, K143, and K190.

This sequence belongs to the phosphoglycerate mutase family. BPG-dependent PGAM subfamily. In terms of assembly, dimer. Forms a ternary complex with NFE2L2 and KEAP1. Interacts with BCL2L1 and MAP3K5. Upon TNF-induced necrosis, forms in complex with RIPK1, RIPK3 and MLKL; the formation of this complex leads to PGAM5 phosphorylation. Isoform 2, but not isoform 1, interacts with DNM1L; this interaction leads to DNM1L dephosphorylation and activation and eventually to mitochondria fragmentation. Phosphorylated by the RIPK1/RIPK3 complex under necrotic conditions. This phosphorylation increases PGAM5 phosphatase activity. Post-translationally, proteolytically cleaved by PARL in response to loss of mitochondrial membrane potential.

It localises to the mitochondrion outer membrane. The protein resides in the mitochondrion inner membrane. The enzyme catalyses O-phospho-L-seryl-[protein] + H2O = L-seryl-[protein] + phosphate. The catalysed reaction is O-phospho-L-threonyl-[protein] + H2O = L-threonyl-[protein] + phosphate. In terms of biological role, mitochondrial serine/threonine phosphatase that dephosphorylates various substrates and thus plays a role in different biological processes including cellular senescence or mitophagy. Modulates cellular senescence by regulating mitochondrial dynamics. Mechanistically, participates in mitochondrial fission through dephosphorylating DNM1L/DRP1. Additionally, dephosphorylates MFN2 in a stress-sensitive manner and consequently protects it from ubiquitination and degradation to promote mitochondrial network formation. Regulates mitophagy independent of PARKIN by interacting with and dephosphorylating FUNDC1, which interacts with LC3. Regulates anti-oxidative response by forming a tertiary complex with KEAP1 and NRF2. Regulates necroptosis by acting as a RIPK3 target and recruiting the RIPK1-RIPK3-MLKL necrosis 'attack' complex to mitochondria. The protein is Serine/threonine-protein phosphatase PGAM5, mitochondrial (Pgam5) of Rattus norvegicus (Rat).